The following is a 2599-amino-acid chain: Protein DOP1 homolog (2599 aa).

Disordered regions lie at residues 532 to 571 (EQSGGSSSDEKITMNSASDAGKTEAGAQGNSLEKSKSDSR) and 595 to 701 (ASNQ…LDEE). Composition is skewed to polar residues over residues 534–549 (SGGSSSDEKITMNSAS), 595–604 (ASNQSVGRQS), and 625–636 (ASDTGQQSSSDL). The residue at position 753 (Ser-753) is a Phosphoserine. Residues 1240–1251 (PRIEIPHKETPL) show a composition bias toward basic and acidic residues. Disordered stretches follow at residues 1240–1316 (PRIE…SSSA) and 1347–1368 (TYRLTREKTPGENSLNSLEQKD). Residues 1264 to 1282 (QPSQEQPANQPDNSLQYDQ) are compositionally biased toward polar residues. Positions 1297-1309 (SELRETSIEKEDS) are enriched in basic and acidic residues. Residue Thr-1355 is modified to Phosphothreonine. Ser-1360, Ser-1363, and Ser-1371 each carry phosphoserine. Residues 1409-1442 (CISKTSTDSNISGSHVEQPEQEEETEPGTESTIN) form a disordered region. Residues 1410–1423 (ISKTSTDSNISGSH) show a composition bias toward polar residues. Ser-2525 is modified (phosphoserine).

This sequence belongs to the DOP1 family.

The protein resides in the golgi apparatus membrane. Functionally, may be involved in protein traffic between late Golgi and early endosomes. The sequence is that of Protein DOP1 homolog from Drosophila melanogaster (Fruit fly).